The following is a 49-amino-acid chain: Osteocalcin (49 aa).

One can recognise a Gla domain in the interval 1 to 47; sequence YLYQWLGAPAPYPDPLEPKREVCELNPDCDELADHIGFQEAYRRFYG. A 4-hydroxyproline modification is found at proline 9. Ca(2+)-binding residues include glutamate 17, glutamate 21, glutamate 24, and aspartate 30. 3 positions are modified to 4-carboxyglutamate: glutamate 17, glutamate 21, and glutamate 24. The cysteines at positions 23 and 29 are disulfide-linked.

The protein belongs to the osteocalcin/matrix Gla protein family. Gamma-carboxyglutamate residues are formed by vitamin K dependent carboxylation by GGCX. These residues are essential for the binding of calcium. Decarboxylation promotes the hormone activity.

The protein resides in the secreted. Functionally, the carboxylated form is one of the main organic components of the bone matrix, which constitutes 1-2% of the total bone protein: it acts as a negative regulator of bone formation and is required to limit bone formation without impairing bone resorption or mineralization. The carboxylated form binds strongly to apatite and calcium. Its function is as follows. The uncarboxylated form acts as a hormone secreted by osteoblasts, which regulates different cellular processes, such as energy metabolism, male fertility and brain development. Regulates of energy metabolism by acting as a hormone favoring pancreatic beta-cell proliferation, insulin secretion and sensitivity and energy expenditure. Uncarboxylated osteocalcin hormone also promotes testosterone production in the testes: acts as a ligand for G protein-coupled receptor GPRC6A at the surface of Leydig cells, initiating a signaling response that promotes the expression of enzymes required for testosterone synthesis in a CREB-dependent manner. Also acts as a regulator of brain development: osteocalcin hormone crosses the blood-brain barrier and acts as a ligand for GPR158 on neurons, initiating a signaling response that prevents neuronal apoptosis in the hippocampus, favors the synthesis of all monoamine neurotransmitters and inhibits that of gamma-aminobutyric acid (GABA). Osteocalcin also crosses the placenta during pregnancy and maternal osteocalcin is required for fetal brain development. The protein is Osteocalcin (BGLAP) of Macaca fascicularis (Crab-eating macaque).